A 308-amino-acid chain; its full sequence is D-alanine--D-alanine ligase (308 aa).

The ATP-grasp domain occupies 104–301 (KQIWQGSDLP…FDELCVAILE (198 aa)). An ATP-binding site is contributed by 130 to 185 (IAELGLPVIIKPVHEGSSVGMSKVEKAEDFAAAIEKATQHDAVVMAEKWITGREFT). Residues Asp255, Glu268, and Asn270 each coordinate Mg(2+).

It belongs to the D-alanine--D-alanine ligase family. Requires Mg(2+) as cofactor. Mn(2+) serves as cofactor.

The protein resides in the cytoplasm. It catalyses the reaction 2 D-alanine + ATP = D-alanyl-D-alanine + ADP + phosphate + H(+). It participates in cell wall biogenesis; peptidoglycan biosynthesis. In terms of biological role, cell wall formation. This Acinetobacter baumannii (strain SDF) protein is D-alanine--D-alanine ligase.